The primary structure comprises 193 residues: T-cell receptor-associated transmembrane adapter 1 (193 aa).

Residues 1–10 (MSGNAECHFS) lie on the Extracellular side of the membrane. Residues 11-31 (IWAILAFLGLALTISLIFNIF) form a helical; Signal-anchor for type III membrane protein membrane-spanning segment. The Cytoplasmic portion of the chain corresponds to 32-193 (HCVEKQRQEK…LHSLDYDLAQ (162 aa)). Ser46 is modified (phosphoserine). Phosphotyrosine is present on Tyr80. Positions 80 to 83 (YEQM) are interaction with PIK3R1. Residues 116–166 (NEGKRRKPRKQKSHLSDKDEEGQMHAKDISLSKTTLVDSYPPESEAIEENI) are disordered. Basic residues predominate over residues 119–128 (KRRKPRKQKS). The span at 129–145 (HLSDKDEEGQMHAKDIS) shows a compositional bias: basic and acidic residues.

Homodimer; disulfide-linked. Interacts with CD3Z. When phosphorylated, interacts with PIK3R1. Phosphorylated on tyrosines upon TCR activation.

It is found in the cell membrane. Stabilizes the TCR (T-cell antigen receptor)/CD3 complex at the surface of T-cells. The polypeptide is T-cell receptor-associated transmembrane adapter 1 (TRAT1) (Bos taurus (Bovine)).